Here is a 334-residue protein sequence, read N- to C-terminus: RNA ligase 2 (334 aa).

The adenylyltransferase stretch occupies residues 1–234 (MFKKYSSLEN…KCKNSKFSEK (234 aa)). AMP contacts are provided by Glu34, Lys35, Ile36, Asn40, Arg55, and Glu99. Catalysis depends on Lys35, which acts as the N6-AMP-lysine intermediate. Residues Ile162, Leu164, Asn166, Glu204, and Tyr206 each coordinate Mg(2+). The AMP site is built by Lys225 and Lys227.

Belongs to the RNA ligase 2 family. The cofactor is Mg(2+). Mn(2+) serves as cofactor.

The catalysed reaction is ATP + (ribonucleotide)n-3'-hydroxyl + 5'-phospho-(ribonucleotide)m = (ribonucleotide)n+m + AMP + diphosphate.. Functionally, repairs 3'-OH/5'-PO4 nicks in duplex RNA or RNA:DNA hybrid in which the broken 3'-OH strand is RNA. The nick ligation reaction entails three nucleotidyl transfer steps. In the first step, the RNA ligase reacts with ATP in the absence of nucleic acid to form a covalent ligase-AMP intermediate and release pyrophosphate. In step 2, the ligase-AMP binds to the nicked duplex nucleic acid and transfers the adenylate to the 5'-PO4 terminus to form an adenylylated nicked intermediate. In step 3, the RNA ligase directs the attack of the nick 3'-OH on the 5'-phosphoanhydride linkage, resulting in a repaired 3' - 5' phosphodiester and release of AMP. The polypeptide is RNA ligase 2 (Y10A) (Enterobacteria phage T4 (Bacteriophage T4)).